A 508-amino-acid polypeptide reads, in one-letter code: Maturase K (508 aa).

The protein belongs to the intron maturase 2 family. MatK subfamily.

It is found in the plastid. The protein resides in the chloroplast. In terms of biological role, usually encoded in the trnK tRNA gene intron. Probably assists in splicing its own and other chloroplast group II introns. This is Maturase K from Lupinus cosentinii (West Australian blue lupine).